Consider the following 360-residue polypeptide: Phospho-N-acetylmuramoyl-pentapeptide-transferase (360 aa).

10 helical membrane passes run 18–38, 73–93, 97–117, 135–155, 168–188, 199–219, 236–256, 263–283, 288–308, and 339–359; these read VFSY…MMSL, TMGG…WADL, YVWA…VDDY, FWQS…STQA, VLPQ…VGTS, GLAI…AYLT, ASEL…FLWF, VFMG…IAVL, LLLI…ILQV, and IVRF…TLKI.

Belongs to the glycosyltransferase 4 family. MraY subfamily. Requires Mg(2+) as cofactor.

It localises to the cell inner membrane. It carries out the reaction UDP-N-acetyl-alpha-D-muramoyl-L-alanyl-gamma-D-glutamyl-meso-2,6-diaminopimeloyl-D-alanyl-D-alanine + di-trans,octa-cis-undecaprenyl phosphate = di-trans,octa-cis-undecaprenyl diphospho-N-acetyl-alpha-D-muramoyl-L-alanyl-D-glutamyl-meso-2,6-diaminopimeloyl-D-alanyl-D-alanine + UMP. The protein operates within cell wall biogenesis; peptidoglycan biosynthesis. Functionally, catalyzes the initial step of the lipid cycle reactions in the biosynthesis of the cell wall peptidoglycan: transfers peptidoglycan precursor phospho-MurNAc-pentapeptide from UDP-MurNAc-pentapeptide onto the lipid carrier undecaprenyl phosphate, yielding undecaprenyl-pyrophosphoryl-MurNAc-pentapeptide, known as lipid I. This Pseudoalteromonas translucida (strain TAC 125) protein is Phospho-N-acetylmuramoyl-pentapeptide-transferase.